The chain runs to 646 residues: Exoribonuclease 2 (646 aa).

One can recognise an RNB domain in the interval 191–518 (RIDLTALDFV…NHRLLKAIIQ (328 aa)). Residues 563–645 (DKTFSAEIVD…ETRNIVARPV (83 aa)) enclose the S1 motif domain.

Belongs to the RNR ribonuclease family. RNase II subfamily.

It is found in the cytoplasm. It catalyses the reaction Exonucleolytic cleavage in the 3'- to 5'-direction to yield nucleoside 5'-phosphates.. Involved in mRNA degradation. Hydrolyzes single-stranded polyribonucleotides processively in the 3' to 5' direction. The polypeptide is Exoribonuclease 2 (Xenorhabdus bovienii (strain SS-2004) (Xenorhabdus nematophila subsp. bovienii)).